The chain runs to 132 residues: MSVNDPLGDMLTRIRNAIGRKKTTVSTPASRLRARVLDVMKAEGYIRDYTQVDYDNGKSELEIQLKYLEGAPVIREIARVSKPGRRVYVSVKSIPHVANGLGIAILSTPKGVMADHEAREKNVGGEFLCQIF.

The protein belongs to the universal ribosomal protein uS8 family. Part of the 30S ribosomal subunit. Contacts proteins S5 and S12.

In terms of biological role, one of the primary rRNA binding proteins, it binds directly to 16S rRNA central domain where it helps coordinate assembly of the platform of the 30S subunit. The protein is Small ribosomal subunit protein uS8 of Chelativorans sp. (strain BNC1).